Here is a 514-residue protein sequence, read N- to C-terminus: 2-isopropylmalate synthase (514 aa).

The Pyruvate carboxyltransferase domain maps to 5–268 (LIIFDTTLRD…DVGIDTTQIV (264 aa)). Positions 14, 202, 204, and 239 each coordinate Mn(2+). Residues 395-514 (KFVSLSQHSE…KDDKLNPQRA (120 aa)) are regulatory domain.

It belongs to the alpha-IPM synthase/homocitrate synthase family. LeuA type 1 subfamily. Homodimer. Requires Mn(2+) as cofactor.

It localises to the cytoplasm. It carries out the reaction 3-methyl-2-oxobutanoate + acetyl-CoA + H2O = (2S)-2-isopropylmalate + CoA + H(+). It functions in the pathway amino-acid biosynthesis; L-leucine biosynthesis; L-leucine from 3-methyl-2-oxobutanoate: step 1/4. Catalyzes the condensation of the acetyl group of acetyl-CoA with 3-methyl-2-oxobutanoate (2-ketoisovalerate) to form 3-carboxy-3-hydroxy-4-methylpentanoate (2-isopropylmalate). The polypeptide is 2-isopropylmalate synthase (Burkholderia vietnamiensis (strain G4 / LMG 22486) (Burkholderia cepacia (strain R1808))).